A 138-amino-acid polypeptide reads, in one-letter code: Cysteine desulfuration protein SufE (138 aa).

The active-site Cysteine persulfide intermediate is the Cys51.

This sequence belongs to the SufE family. Homodimer. Interacts with SufS.

It is found in the cytoplasm. It functions in the pathway cofactor biosynthesis; iron-sulfur cluster biosynthesis. Its function is as follows. Participates in cysteine desulfuration mediated by SufS. Cysteine desulfuration mobilizes sulfur from L-cysteine to yield L-alanine and constitutes an essential step in sulfur metabolism for biosynthesis of a variety of sulfur-containing biomolecules. Functions as a sulfur acceptor for SufS, by mediating the direct transfer of the sulfur atom from the S-sulfanylcysteine of SufS, an intermediate product of cysteine desulfuration process. This chain is Cysteine desulfuration protein SufE, found in Escherichia coli O45:K1 (strain S88 / ExPEC).